An 883-amino-acid polypeptide reads, in one-letter code: Phosphoenolpyruvate carboxylase (883 aa).

Residues H138 and K546 contribute to the active site.

It belongs to the PEPCase type 1 family. Mg(2+) serves as cofactor.

It catalyses the reaction oxaloacetate + phosphate = phosphoenolpyruvate + hydrogencarbonate. In terms of biological role, forms oxaloacetate, a four-carbon dicarboxylic acid source for the tricarboxylic acid cycle. In Escherichia coli O7:K1 (strain IAI39 / ExPEC), this protein is Phosphoenolpyruvate carboxylase.